A 271-amino-acid polypeptide reads, in one-letter code: Shikimate dehydrogenase (NADP(+)) (271 aa).

Residues 14–16 (SLS) and T61 each bind shikimate. The active-site Proton acceptor is the K65. 2 residues coordinate shikimate: N86 and D101. NADP(+) contacts are provided by residues 125–129 (GAGGA) and I212. Residue Y214 participates in shikimate binding. Residue G235 participates in NADP(+) binding.

It belongs to the shikimate dehydrogenase family. As to quaternary structure, homodimer.

It catalyses the reaction shikimate + NADP(+) = 3-dehydroshikimate + NADPH + H(+). The protein operates within metabolic intermediate biosynthesis; chorismate biosynthesis; chorismate from D-erythrose 4-phosphate and phosphoenolpyruvate: step 4/7. Involved in the biosynthesis of the chorismate, which leads to the biosynthesis of aromatic amino acids. Catalyzes the reversible NADPH linked reduction of 3-dehydroshikimate (DHSA) to yield shikimate (SA). The polypeptide is Shikimate dehydrogenase (NADP(+)) (Clostridium perfringens (strain ATCC 13124 / DSM 756 / JCM 1290 / NCIMB 6125 / NCTC 8237 / Type A)).